Reading from the N-terminus, the 256-residue chain is DNA repair protein RecO (256 aa).

It belongs to the RecO family.

In terms of biological role, involved in DNA repair and RecF pathway recombination. The protein is DNA repair protein RecO of Rhizobium johnstonii (strain DSM 114642 / LMG 32736 / 3841) (Rhizobium leguminosarum bv. viciae).